Here is a 270-residue protein sequence, read N- to C-terminus: Small ribosomal subunit protein eS1 (270 aa).

2 disordered regions span residues 1–21 (MAVG…KKKV) and 238–270 (GGGK…QESV).

It belongs to the eukaryotic ribosomal protein eS1 family. Component of the small ribosomal subunit. Mature ribosomes consist of a small (40S) and a large (60S) subunit. The 40S subunit contains about 33 different proteins and 1 molecule of RNA (18S). The 60S subunit contains about 49 different proteins and 3 molecules of RNA (28S, 5.8S and 5S).

The protein resides in the cytoplasm. This is Small ribosomal subunit protein eS1 from Aedes aegypti (Yellowfever mosquito).